Reading from the N-terminus, the 885-residue chain is Rho GTPase-activating protein gacFF (885 aa).

Residues 168–182 (TTTNNSNNSNSNNNN) are compositionally biased toward low complexity. The disordered stretch occupies residues 168 to 187 (TTTNNSNNSNSNNNNKQYNS). Positions 222–249 (LINKIQNDSEQLKLVLSQVEQQIEFLKS) form a coiled coil. One can recognise an F-box domain in the interval 348 to 394 (SDIFSLLPTHLTLYVFSYLEPKELLILAQVSSQWQKLAGDNLLWVRF). The region spanning 464 to 571 (SSSKEGWLYK…WMILLNSIIK (108 aa)) is the PH domain. 2 stretches are compositionally biased toward low complexity: residues 594–622 (NNVY…NNNN) and 629–648 (LPPL…SSTG). The interval 594 to 680 (NNVYINNNNN…GGGSGGNNNF (87 aa)) is disordered. Residues 701–885 (VALSKILENQ…KYYDEIFIKK (185 aa)) form the Rho-GAP domain.

The protein resides in the cytoplasm. Its function is as follows. Rho GTPase-activating protein involved in the signal transduction pathway. This chain is Rho GTPase-activating protein gacFF (gacFF), found in Dictyostelium discoideum (Social amoeba).